The sequence spans 729 residues: Serine/threonine-protein kinase TBK1 (729 aa).

The Protein kinase domain maps to 9-310 (WLLSDILGQG…ETSDVLHRMV (302 aa)). 15–23 (LGQGATANV) contributes to the ATP binding site. Lys30 participates in a covalent cross-link: Glycyl lysine isopeptide (Lys-Gly) (interchain with G-Cter in ubiquitin). Lys38 serves as a coordination point for ATP. Asp135 serves as the catalytic Proton acceptor. At Ser172 the chain carries Phosphoserine; by autocatalysis and IKKB. The Ubiquitin-like domain maps to 309–385 (MVIHVFSLQH…ENPIFVTSRE (77 aa)). Lys401 is covalently cross-linked (Glycyl lysine isopeptide (Lys-Gly) (interchain with G-Cter in ubiquitin)). Coiled-coil stretches lie at residues 407 to 657 (DLDG…LQET) and 658 to 713 (LPQK…ILER). Residues 621–729 (RKMLHLRKQL…DGGLRNVDCL (109 aa)) form an interaction with AZI2, TANK and TBKBP1 region. Lys670 participates in a covalent cross-link: Glycyl lysine isopeptide (Lys-Gly) (interchain with G-Cter in ubiquitin). Ser716 carries the phosphoserine modification.

The protein belongs to the protein kinase superfamily. Ser/Thr protein kinase family. I-kappa-B kinase subfamily. Homodimer. Interacts with DDX3X, TIRAP and TRAF2. Part of a ternary complex consisting of TANK, TRAF2 and TBK1. Interacts with AZI2, TANK and TBKBP1; these interactions are mutually exclusive and mediate TBK1 activation. Interacts with GSK3B; this interaction promotes TBK1 self-association and autophosphorylation. Interacts with SIKE1; SIKE1 is associated with TBK1 under physiological condition and dissociated from TBK1 upon viral infection or TLR3 stimulation. Interacts with IRF3, leading to IRF3 phosphorylation. Interacts with RIGI. Interacts with CYLD. Interacts with OPTN and TRAF3. Interacts with SRC. Interacts with the exocyst complex subunit SEC5/EXOC2; this interaction is sufficient to trigger TBK1 activity. Interacts with STING1, leading to STING1 phosphorylation. Interacts with IFIT3 (via N-terminus). Interacts with MAVS; interaction only takes place in the presence of IFIT3 and leads to MAVS phosphorylation. Interacts (via protein kinase domain) with TTLL12 (via TTL domain); the interaction prevents MAVS binding to TBK1. Interacts with TICAM1; this interaction is enhanced in the presence of WDFY1 and leads to TICAM1 phosphorylation. Interacts with TRIM26. Interacts with TRIM23. Interacts with TTC4 and IKBKE. Interacts with HNRNPA2B1. Interacts with DDX3X. Interacts with TRIM14. Interacts with CEP170; efficient complex formation may be dependent on the presence of CCDC61. Interacts with TRAF3IP3. Interacts with HSP90AA1; the interaction mediates TBK1 association with TOMM70. Interacts with TAX1BP1. Interacts with kinase IKBKB; the complex interacts with STAT1, leading to phosphorylation of STAT1 on 'Thr-748' by IKBKB. Interacts with ICOS; this interaction is critical for the maturation of T follicular regulatory cells. Interacts with RNF144B; this interaction prevents TBK1 phosphorylation and subsequent activation. Interacts with ASB8; this interaction promotes TBK1 proteasomal degradation. Autophosphorylation at Ser-172 activates the kinase, and is an essential step for virus-triggered signaling. Phosphorylated by IKBKB/IKKB at Ser-172. Phosphorylation requires homodimerization and ubiquitination at Lys-30 and Lys-401. Dephosphorylated at Ser-172 by PPM1B and this negatively regulates its role in mediating antiviral response. In terms of processing, 'Lys-63'-linked polyubiquitination by MIB1 after RNA virus infection, or by NRDP1 after LPS stimulation at Lys-30 and Lys-401, participates in kinase activation. 'Lys-48'-linked polyubiquitination at Lys-670 by DTX4 leads to proteasomal degradation. 'Lys-48'-linked polyubiquitination by TRAIP also leads to proteasomal degradation. 'Lys-48'-linked polyubiquitination by TRAF7; leading to proteasomal degradation. 'Lys-63'-linked polyubiquitination by RNF128 at Lys-30 and Lys-401 leads to the activation of antiviral responses. 'Lys-48'-linked polyubiquitination after 'lys-33'-linked deubiquitination by USP38 promotes TBK1 degradation.

The protein resides in the cytoplasm. It carries out the reaction L-seryl-[protein] + ATP = O-phospho-L-seryl-[protein] + ADP + H(+). It catalyses the reaction L-threonyl-[protein] + ATP = O-phospho-L-threonyl-[protein] + ADP + H(+). Its activity is regulated as follows. Kinase activity is inhibited competitively by amlexanox. Serine/threonine kinase that plays an essential role in regulating inflammatory responses to foreign agents. Following activation of toll-like receptors by viral or bacterial components, associates with TRAF3 and TANK and phosphorylates interferon regulatory factors (IRFs) IRF3 and IRF7 as well as DDX3X. This activity allows subsequent homodimerization and nuclear translocation of the IRFs leading to transcriptional activation of pro-inflammatory and antiviral genes including IFNA and IFNB. In order to establish such an antiviral state, TBK1 form several different complexes whose composition depends on the type of cell and cellular stimuli. Thus, several scaffolding molecules including FADD, TRADD, MAVS, AZI2, TANK or TBKBP1/SINTBAD can be recruited to the TBK1-containing-complexes. Plays a key role in IRF3 activation: acts by first phosphorylating innate adapter proteins MAVS, STING1 and TICAM1 on their pLxIS motif, leading to recruitment of IRF3, thereby licensing IRF3 for phosphorylation by TBK1. Under particular conditions, functions as a NF-kappa-B effector by phosphorylating NF-kappa-B inhibitor alpha/NFKBIA, IKBKB or RELA to translocate NF-Kappa-B to the nucleus. Restricts bacterial proliferation by phosphorylating the autophagy receptor OPTN/Optineurin on 'Ser-177', thus enhancing LC3 binding affinity and antibacterial autophagy. Phosphorylates SMCR8 component of the C9orf72-SMCR8 complex, promoting autophagosome maturation. Phosphorylates ATG8 proteins MAP1LC3C and GABARAPL2, thereby preventing their delipidation and premature removal from nascent autophagosomes. Seems to play a role in energy balance regulation by sustaining a state of chronic, low-grade inflammation in obesity, which leads to a negative impact on insulin sensitivity. Acts both as a positive and negative regulator of the mTORC1 complex, depending on the context: activates mTORC1 in response to growth factors by catalyzing phosphorylation of MTOR, while it limits the mTORC1 complex by promoting phosphorylation of RPTOR. Acts as a positive regulator of the mTORC2 complex by mediating phosphorylation of MTOR, leading to increased phosphorylation and activation of AKT1. Phosphorylates and activates AKT1. Involved in the regulation of TNF-induced RIPK1-mediated cell death, probably acting via CYLD phosphorylation that in turn controls RIPK1 ubiquitination status. Also participates in the differentiation of T follicular regulatory cells together with the receptor ICOS. The chain is Serine/threonine-protein kinase TBK1 from Mus musculus (Mouse).